Consider the following 382-residue polypeptide: Manganese peroxidase H4 (382 aa).

Residues 1–24 (MAFGSLLAFVALAAITRAAPTAES) form the signal peptide. Cystine bridges form between cysteine 27/cysteine 39, cysteine 38/cysteine 313, cysteine 57/cysteine 141, cysteine 277/cysteine 344, and cysteine 366/cysteine 373. Glutamate 59 and glutamate 63 together coordinate Mn(2+). Histidine 70 serves as the catalytic Proton acceptor. Positions 71, 86, 88, and 90 each coordinate Ca(2+). Residues asparagine 100 and asparagine 155 are each glycosylated (N-linked (GlcNAc...) asparagine). Position 197 (histidine 197) interacts with heme b. Threonine 198 is a binding site for Ca(2+). Aspartate 203 is a Mn(2+) binding site. Positions 215, 217, 220, and 222 each coordinate Ca(2+). An N-linked (GlcNAc...) asparagine glycan is attached at asparagine 241.

It belongs to the peroxidase family. Ligninase subfamily. The cofactor is heme b. Ca(2+) serves as cofactor.

The protein localises to the secreted. The enzyme catalyses 2 Mn(2+) + H2O2 + 2 H(+) = 2 Mn(3+) + 2 H2O. Functionally, catalyzes the oxidation of Mn(2+) to Mn(3+). The latter, acting as a diffusible redox mediator, is capable of oxidizing a variety of lignin compounds. In Phanerodontia chrysosporium (White-rot fungus), this protein is Manganese peroxidase H4.